Consider the following 209-residue polypeptide: Pyrrolidone-carboxylate peptidase (209 aa).

Active-site residues include Glu-79, Cys-142, and His-164.

Belongs to the peptidase C15 family. In terms of assembly, homotetramer.

The protein localises to the cytoplasm. It carries out the reaction Release of an N-terminal pyroglutamyl group from a polypeptide, the second amino acid generally not being Pro.. In terms of biological role, removes 5-oxoproline from various penultimate amino acid residues except L-proline. The sequence is that of Pyrrolidone-carboxylate peptidase from Saccharolobus islandicus (strain L.S.2.15 / Lassen #1) (Sulfolobus islandicus).